An 870-amino-acid polypeptide reads, in one-letter code: Valine--tRNA ligase (870 aa).

The 'HIGH' region signature appears at 42-52; sequence PNVTGVLHIGH. A 'KMSKS' region motif is present at residues 527 to 531; it reads KMSKS. Residue Lys530 coordinates ATP. Residues 800 to 870 adopt a coiled-coil conformation; sequence LENVDLSGIL…ISVELQNLRG (71 aa).

Belongs to the class-I aminoacyl-tRNA synthetase family. ValS type 1 subfamily. In terms of assembly, monomer.

The protein localises to the cytoplasm. It carries out the reaction tRNA(Val) + L-valine + ATP = L-valyl-tRNA(Val) + AMP + diphosphate. Its function is as follows. Catalyzes the attachment of valine to tRNA(Val). As ValRS can inadvertently accommodate and process structurally similar amino acids such as threonine, to avoid such errors, it has a 'posttransfer' editing activity that hydrolyzes mischarged Thr-tRNA(Val) in a tRNA-dependent manner. The chain is Valine--tRNA ligase from Campylobacter jejuni subsp. jejuni serotype O:2 (strain ATCC 700819 / NCTC 11168).